The chain runs to 377 residues: Alanine racemase (377 aa).

K37 serves as the catalytic Proton acceptor; specific for D-alanine. Residue K37 is modified to N6-(pyridoxal phosphate)lysine. R135 contacts substrate. Y271 functions as the Proton acceptor; specific for L-alanine in the catalytic mechanism. Residue M319 participates in substrate binding.

Belongs to the alanine racemase family. It depends on pyridoxal 5'-phosphate as a cofactor.

It catalyses the reaction L-alanine = D-alanine. The protein operates within amino-acid biosynthesis; D-alanine biosynthesis; D-alanine from L-alanine: step 1/1. In terms of biological role, catalyzes the interconversion of L-alanine and D-alanine. May also act on other amino acids. In Helicobacter pylori (strain Shi470), this protein is Alanine racemase (alr).